A 342-amino-acid chain; its full sequence is Olfactory receptor 51F2 (342 aa).

Residues methionine 1 to tyrosine 39 are Extracellular-facing. Asparagine 17 carries N-linked (GlcNAc...) asparagine glycosylation. Residues tryptophan 40–leucine 60 form a helical membrane-spanning segment. Over phenylalanine 61–serine 68 the chain is Cytoplasmic. A helical membrane pass occupies residues leucine 69 to leucine 89. Over cysteine 90 to alanine 113 the chain is Extracellular. A disulfide bridge connects residues cysteine 111 and cysteine 203. The helical transmembrane segment at glutamine 114–phenylalanine 134 threads the bilayer. Over aspartate 135–alanine 153 the chain is Cytoplasmic. A helical transmembrane segment spans residues arginine 154 to methionine 174. Residues leucine 175–serine 210 are Extracellular-facing. The chain crosses the membrane as a helical span at residues isoleucine 211–serine 231. Residues tyrosine 232–alanine 251 are Cytoplasmic-facing. A helical membrane pass occupies residues phenylalanine 252 to leucine 272. Residues serine 273–histidine 287 are Extracellular-facing. Residues isoleucine 288 to valine 308 form a helical membrane-spanning segment. The Cytoplasmic segment spans residues lysine 309–glutamate 342.

Belongs to the G-protein coupled receptor 1 family.

It localises to the cell membrane. Odorant receptor. The sequence is that of Olfactory receptor 51F2 (OR51F2) from Homo sapiens (Human).